The sequence spans 107 residues: U20-lycotoxin-Ls1b (107 aa).

The N-terminal stretch at 1–30 is a signal peptide; that stretch reads MFSTSDQVSKMNSRILSALLILGIATCVIA. Residues 31–76 enclose the WAP domain; it reads GGFCPKSRHPQCNLSYKINDCCAQSDCRVGSVCCVEGCGNVCRAES. 5 disulfide bridges follow: cysteine 34–cysteine 64, cysteine 42–cysteine 68, cysteine 51–cysteine 63, cysteine 52–cysteine 90, and cysteine 57–cysteine 72.

Belongs to the venom protein 11 family. 02 (wap-2) subfamily. Contains 5 disulfide bonds. In terms of tissue distribution, expressed by the venom gland.

The protein resides in the secreted. Functionally, has antibacterial activity. The protein is U20-lycotoxin-Ls1b of Lycosa singoriensis (Wolf spider).